The primary structure comprises 1468 residues: DNA-directed RNA polymerase subunit beta (1468 aa).

The protein belongs to the RNA polymerase beta chain family. In terms of assembly, the RNAP catalytic core consists of 2 alpha, 1 beta, 1 beta' and 1 omega subunit. When a sigma factor is associated with the core the holoenzyme is formed, which can initiate transcription.

The catalysed reaction is RNA(n) + a ribonucleoside 5'-triphosphate = RNA(n+1) + diphosphate. In terms of biological role, DNA-dependent RNA polymerase catalyzes the transcription of DNA into RNA using the four ribonucleoside triphosphates as substrates. This Aquifex aeolicus (strain VF5) protein is DNA-directed RNA polymerase subunit beta.